Consider the following 622-residue polypeptide: Low affinity potassium transport system protein Kup (622 aa).

12 helical membrane passes run leucine 9–leucine 29, valine 49–leucine 69, valine 103–isoleucine 123, proline 137–isoleucine 157, valine 165–leucine 185, valine 213–alanine 233, tryptophan 247–leucine 267, proline 276–alanine 296, isoleucine 337–phenylalanine 357, leucine 363–threonine 383, phenylalanine 396–leucine 416, and leucine 419–threonine 439.

This sequence belongs to the HAK/KUP transporter (TC 2.A.72) family.

The protein localises to the cell inner membrane. It carries out the reaction K(+)(in) + H(+)(in) = K(+)(out) + H(+)(out). Responsible for the low-affinity transport of potassium into the cell. Likely operates as a K(+):H(+) symporter. In Citrobacter koseri (strain ATCC BAA-895 / CDC 4225-83 / SGSC4696), this protein is Low affinity potassium transport system protein Kup.